We begin with the raw amino-acid sequence, 445 residues long: Chromosomal replication initiator protein DnaA (445 aa).

Residues 1 to 69 (MEKIWLEAQS…IEAISSLTNI (69 aa)) form a domain I, interacts with DnaA modulators region. The segment at 69-108 (IKYQVDFKITEKSQVEKKKVDLQATEKIENDSTRNVDFNT) is domain II. The segment at 109–325 (NLNPKYTFDS…GMLIRLGAYA (217 aa)) is domain III, AAA+ region. The ATP site is built by Gly153, Gly155, Lys156, and Thr157. Positions 326-445 (SLTGSEISLN…VEKMKKELMS (120 aa)) are domain IV, binds dsDNA.

The protein belongs to the DnaA family. In terms of assembly, oligomerizes as a right-handed, spiral filament on DNA at oriC.

It is found in the cytoplasm. In terms of biological role, plays an essential role in the initiation and regulation of chromosomal replication. ATP-DnaA binds to the origin of replication (oriC) to initiate formation of the DNA replication initiation complex once per cell cycle. Binds the DnaA box (a 9 base pair repeat at the origin) and separates the double-stranded (ds)DNA. Forms a right-handed helical filament on oriC DNA; dsDNA binds to the exterior of the filament while single-stranded (ss)DNA is stabiized in the filament's interior. The ATP-DnaA-oriC complex binds and stabilizes one strand of the AT-rich DNA unwinding element (DUE), permitting loading of DNA polymerase. After initiation quickly degrades to an ADP-DnaA complex that is not apt for DNA replication. Binds acidic phospholipids. In Geotalea daltonii (strain DSM 22248 / JCM 15807 / FRC-32) (Geobacter daltonii), this protein is Chromosomal replication initiator protein DnaA.